Reading from the N-terminus, the 79-residue chain is Short neurotoxin 4 (79 aa).

A signal peptide spans 1 to 21 (MKTLLLTLVMVTIMCLDLGYT). 3 disulfides stabilise this stretch: Cys24–Cys41, Cys34–Cys59, and Cys63–Cys71.

It belongs to the three-finger toxin family. Short-chain subfamily. Type III alpha-neurotoxin sub-subfamily. In terms of tissue distribution, expressed by the venom gland.

It localises to the secreted. Functionally, binds with high affinity to muscle nicotinic acetylcholine receptor (nAChR) and hinders acetylcholine binding to the receptor, thereby impairing neuromuscular transmission. Causes muscle paralysis, spasms and increased respiration. The polypeptide is Short neurotoxin 4 (Pseudonaja textilis (Eastern brown snake)).